We begin with the raw amino-acid sequence, 413 residues long: uncharacterized protein (413 aa).

4 helical membrane-spanning segments follow: residues 22-42, 270-290, 312-332, and 379-399; these read VLLV…TLIL, IIYV…ISIC, ILIQ…GNLI, and LIII…YPIY.

This sequence belongs to the ABC-4 integral membrane protein family. LolC/E subfamily.

The protein resides in the cell membrane. This is an uncharacterized protein from Buchnera aphidicola subsp. Schizaphis graminum (strain Sg).